A 290-amino-acid chain; its full sequence is Phosphatidylglycerol--prolipoprotein diacylglyceryl transferase (290 aa).

7 consecutive transmembrane segments (helical) span residues 21-41, 60-80, 96-116, 124-144, 199-219, 226-246, and 259-279; these read VSLH…MWLA, LLYA…VLFY, WDGG…MLWF, FFQV…AGRL, SQLY…NLFI, GSVS…VECF, and VISM…IMMI. Residue R143 participates in a 1,2-diacyl-sn-glycero-3-phospho-(1'-sn-glycerol) binding.

This sequence belongs to the Lgt family.

It is found in the cell inner membrane. It catalyses the reaction L-cysteinyl-[prolipoprotein] + a 1,2-diacyl-sn-glycero-3-phospho-(1'-sn-glycerol) = an S-1,2-diacyl-sn-glyceryl-L-cysteinyl-[prolipoprotein] + sn-glycerol 1-phosphate + H(+). It participates in protein modification; lipoprotein biosynthesis (diacylglyceryl transfer). Catalyzes the transfer of the diacylglyceryl group from phosphatidylglycerol to the sulfhydryl group of the N-terminal cysteine of a prolipoprotein, the first step in the formation of mature lipoproteins. This Yersinia enterocolitica serotype O:8 / biotype 1B (strain NCTC 13174 / 8081) protein is Phosphatidylglycerol--prolipoprotein diacylglyceryl transferase.